Consider the following 509-residue polypeptide: tRNA (guanine(37)-N(1))-methyltransferase (509 aa).

The transit peptide at 1 to 57 directs the protein to the mitochondrion; that stretch reads MVLWILWRPFGFSRRLLKLERHSITESKSLIPLAWTSLTQTLSESPGIFLLGQRKRF. S-adenosyl-L-methionine contacts are provided by residues His289, 327–328, 355–356, and Asn387; these read DL and DG. Residues 478 to 509 are disordered; that stretch reads TKNPENHEDPPLKRQRTAEAFSDEKTQIASNT.

Belongs to the class I-like SAM-binding methyltransferase superfamily. TRM5/TYW2 family. As to quaternary structure, monomer.

It is found in the mitochondrion matrix. Its subcellular location is the nucleus. The protein localises to the cytoplasm. It carries out the reaction guanosine(37) in tRNA + S-adenosyl-L-methionine = N(1)-methylguanosine(37) in tRNA + S-adenosyl-L-homocysteine + H(+). In terms of biological role, involved in mitochondrial tRNA methylation. Specifically methylates the N1 position of guanosine-37 in various tRNAs. Methylation is not dependent on the nature of the nucleoside 5' of the target nucleoside. This is the first step in the biosynthesis of wybutosine (yW), a modified base adjacent to the anticodon of tRNAs and required for accurate decoding. In Macaca fascicularis (Crab-eating macaque), this protein is tRNA (guanine(37)-N(1))-methyltransferase.